The chain runs to 439 residues: Proline--tRNA ligase (439 aa).

This sequence belongs to the class-II aminoacyl-tRNA synthetase family. ProS type 2 subfamily. In terms of assembly, homodimer.

The protein localises to the cytoplasm. The catalysed reaction is tRNA(Pro) + L-proline + ATP = L-prolyl-tRNA(Pro) + AMP + diphosphate. In terms of biological role, catalyzes the attachment of proline to tRNA(Pro) in a two-step reaction: proline is first activated by ATP to form Pro-AMP and then transferred to the acceptor end of tRNA(Pro). The protein is Proline--tRNA ligase of Rhodopseudomonas palustris (strain BisB5).